A 106-amino-acid chain; its full sequence is Small ribosomal subunit protein uS10 (106 aa).

The protein belongs to the universal ribosomal protein uS10 family. Part of the 30S ribosomal subunit.

Functionally, involved in the binding of tRNA to the ribosomes. This Pyrobaculum calidifontis (strain DSM 21063 / JCM 11548 / VA1) protein is Small ribosomal subunit protein uS10.